Here is a 429-residue protein sequence, read N- to C-terminus: Aspartate--tRNA(Asp/Asn) ligase (429 aa).

Residue E167 coordinates L-aspartate. The tract at residues 189 to 192 (QLYK) is aspartate. Residue R210 coordinates L-aspartate. ATP contacts are provided by residues 210–212 (RAE) and E352. Mg(2+) contacts are provided by E352 and S355. L-aspartate is bound by residues S355 and R359. 400-403 (GLAR) provides a ligand contact to ATP.

It belongs to the class-II aminoacyl-tRNA synthetase family. Type 2 subfamily. In terms of assembly, homodimer. Mg(2+) serves as cofactor.

Its subcellular location is the cytoplasm. The catalysed reaction is tRNA(Asx) + L-aspartate + ATP = L-aspartyl-tRNA(Asx) + AMP + diphosphate. In terms of biological role, aspartyl-tRNA synthetase with relaxed tRNA specificity since it is able to aspartylate not only its cognate tRNA(Asp) but also tRNA(Asn). Reaction proceeds in two steps: L-aspartate is first activated by ATP to form Asp-AMP and then transferred to the acceptor end of tRNA(Asp/Asn). The sequence is that of Aspartate--tRNA(Asp/Asn) ligase from Saccharolobus solfataricus (strain ATCC 35092 / DSM 1617 / JCM 11322 / P2) (Sulfolobus solfataricus).